A 239-amino-acid polypeptide reads, in one-letter code: tRNA (guanine-N(1)-)-methyltransferase (239 aa).

S-adenosyl-L-methionine contacts are provided by residues G110 and 130-135 (IGDYVL).

The protein belongs to the RNA methyltransferase TrmD family. Homodimer.

It localises to the cytoplasm. It catalyses the reaction guanosine(37) in tRNA + S-adenosyl-L-methionine = N(1)-methylguanosine(37) in tRNA + S-adenosyl-L-homocysteine + H(+). In terms of biological role, specifically methylates guanosine-37 in various tRNAs. This is tRNA (guanine-N(1)-)-methyltransferase from Borrelia garinii subsp. bavariensis (strain ATCC BAA-2496 / DSM 23469 / PBi) (Borreliella bavariensis).